Reading from the N-terminus, the 883-residue chain is Alanine--tRNA ligase (883 aa).

Histidine 563, histidine 567, cysteine 677, and histidine 681 together coordinate Zn(2+).

The protein belongs to the class-II aminoacyl-tRNA synthetase family. Requires Zn(2+) as cofactor.

It is found in the cytoplasm. It carries out the reaction tRNA(Ala) + L-alanine + ATP = L-alanyl-tRNA(Ala) + AMP + diphosphate. Functionally, catalyzes the attachment of alanine to tRNA(Ala) in a two-step reaction: alanine is first activated by ATP to form Ala-AMP and then transferred to the acceptor end of tRNA(Ala). Also edits incorrectly charged Ser-tRNA(Ala) and Gly-tRNA(Ala) via its editing domain. This Cereibacter sphaeroides (strain ATCC 17023 / DSM 158 / JCM 6121 / CCUG 31486 / LMG 2827 / NBRC 12203 / NCIMB 8253 / ATH 2.4.1.) (Rhodobacter sphaeroides) protein is Alanine--tRNA ligase.